Reading from the N-terminus, the 498-residue chain is Isoflavone 2'-hydroxylase (498 aa).

The chain crosses the membrane as a helical span at residues 3–23; the sequence is ILSYLCYSLFYLSIFFIIRLL. A heme-binding site is contributed by Cys436.

Belongs to the cytochrome P450 family. Requires heme as cofactor. As to expression, expressed constitutively in roots, but present at very low levels in uninfected stems and leaves.

It is found in the endoplasmic reticulum membrane. The catalysed reaction is formononetin + reduced [NADPH--hemoprotein reductase] + O2 = 2'-hydroxyformononetin + oxidized [NADPH--hemoprotein reductase] + H2O + H(+). Its function is as follows. Involved in the biosynthesis of the pterocarpin phytoalexins. Acts on isoflavones with a 4'-methoxy group on the B-ring, such as formononetin and biochanin A, and on pseudobaptigenin. Has a low activity with daidzein and genistein and no activity with the 7-O-methylated isoflavonoids isoformononetin and prunetin. This Medicago truncatula (Barrel medic) protein is Isoflavone 2'-hydroxylase.